A 196-amino-acid chain; its full sequence is Chromophore lyase CpcT/CpeT (196 aa).

Belongs to the CpcT/CpeT biliprotein lyase family.

Its function is as follows. Covalently attaches a chromophore to Cys residue(s) of phycobiliproteins. In Thermosynechococcus vestitus (strain NIES-2133 / IAM M-273 / BP-1), this protein is Chromophore lyase CpcT/CpeT.